The sequence spans 503 residues: Aromatase (503 aa).

2 helical membrane passes run 19-39 (EVMP…FFVW) and 51-71 (GYCM…MGLG). The substrate-binding pocket stretch occupies residues 294–324 (ENVNQCILEMMIAAPDTLSVTVFFMLCLIAQ). Substrate contacts are provided by Asp309 and Met374. Cys437 contributes to the heme binding site.

Belongs to the cytochrome P450 family. Heme serves as cofactor. Expressed in placenta. Highly expressed in follicles (0 hour:hCG), followed by a drop (12-24 hour:hCG) and by an increase (30-39 hour:hCG). Highly expressed in corpora lutea. Also expressed in granulosa cell layer. Not expressed in theca interna.

The protein resides in the endoplasmic reticulum membrane. The protein localises to the microsome membrane. It carries out the reaction testosterone + 3 reduced [NADPH--hemoprotein reductase] + 3 O2 = 17beta-estradiol + formate + 3 oxidized [NADPH--hemoprotein reductase] + 4 H2O + 4 H(+). The enzyme catalyses androst-4-ene-3,17-dione + 3 reduced [NADPH--hemoprotein reductase] + 3 O2 = estrone + formate + 3 oxidized [NADPH--hemoprotein reductase] + 4 H2O + 4 H(+). It catalyses the reaction androst-4-ene-3,17-dione + reduced [NADPH--hemoprotein reductase] + O2 = 19-hydroxyandrost-4-ene-3,17-dione + oxidized [NADPH--hemoprotein reductase] + H2O + H(+). The catalysed reaction is 19-hydroxyandrost-4-ene-3,17-dione + reduced [NADPH--hemoprotein reductase] + O2 = 19-oxo-androst-4-ene-3,17-dione + oxidized [NADPH--hemoprotein reductase] + 2 H2O + H(+). It carries out the reaction 19-oxo-androst-4-ene-3,17-dione + reduced [NADPH--hemoprotein reductase] + O2 = estrone + formate + oxidized [NADPH--hemoprotein reductase] + H2O + 2 H(+). The enzyme catalyses estrone + reduced [NADPH--hemoprotein reductase] + O2 = 2-hydroxyestrone + oxidized [NADPH--hemoprotein reductase] + H2O + H(+). It catalyses the reaction 17beta-hydroxy-5alpha-androstan-3-one + reduced [NADPH--hemoprotein reductase] + O2 = 17beta,19-dihydroxy-3-oxo-5alpha-androstanone + oxidized [NADPH--hemoprotein reductase] + H2O + H(+). The catalysed reaction is 17beta,19-dihydroxy-3-oxo-5alpha-androstanone + reduced [NADPH--hemoprotein reductase] + O2 = 17beta-hydroxy-3,19-dioxo-5alpha-androstanone + oxidized [NADPH--hemoprotein reductase] + 2 H2O + H(+). It carries out the reaction 17beta-hydroxy-3,19-dioxo-5alpha-androstanone + reduced [NADPH--hemoprotein reductase] + O2 = 17beta-hydroxy-3-oxo-19-nor-5alpha-androst-1-ene + formate + oxidized [NADPH--hemoprotein reductase] + H2O + 2 H(+). It participates in steroid hormone biosynthesis. A cytochrome P450 monooxygenase that catalyzes the conversion of C19 androgens, androst-4-ene-3,17-dione (androstenedione) and testosterone to the C18 estrogens, estrone and estradiol, respectively. Catalyzes three successive oxidations of C19 androgens: two conventional oxidations at C19 yielding 19-hydroxy and 19-oxo/19-aldehyde derivatives, followed by a third oxidative aromatization step that involves C1-beta hydrogen abstraction combined with cleavage of the C10-C19 bond to yield a phenolic A ring and formic acid. Alternatively, the third oxidative reaction yields a 19-norsteroid and formic acid. Converts dihydrotestosterone to delta1,10-dehydro 19-nordihydrotestosterone and may play a role in homeostasis of this potent androgen. Also displays 2-hydroxylase activity toward estrone. Mechanistically, uses molecular oxygen inserting one oxygen atom into a substrate, and reducing the second into a water molecule, with two electrons provided by NADPH via cytochrome P450 reductase (CPR; NADPH-ferrihemoprotein reductase). This is Aromatase (CYP19A1) from Equus caballus (Horse).